Reading from the N-terminus, the 766-residue chain is 5-methyltetrahydropteroyltriglutamate--homocysteine methyltransferase 1 (766 aa).

The 5-methyltetrahydropteroyltri-L-glutamate site is built by Lys18 and Asn116. Residues 438-440 (IGS) and Glu491 each bind L-homocysteine. L-methionine-binding positions include 438–440 (IGS) and Glu491. 5-methyltetrahydropteroyltri-L-glutamate is bound by residues Asp496, Tyr519, 522-523 (RC), and Trp568. An L-homocysteine-binding site is contributed by Asp606. Asp606 is a binding site for L-methionine. Zn(2+)-binding residues include His648, Cys650, His659, and Glu672. Residue His702 is the Proton donor of the active site. Residue Cys734 participates in Zn(2+) binding.

It belongs to the vitamin-B12 independent methionine synthase family. Requires Zn(2+) as cofactor.

The protein resides in the cytoplasm. The protein localises to the cytosol. It catalyses the reaction 5-methyltetrahydropteroyltri-L-glutamate + L-homocysteine = tetrahydropteroyltri-L-glutamate + L-methionine. It functions in the pathway amino-acid biosynthesis; L-methionine biosynthesis via de novo pathway; L-methionine from L-homocysteine (MetE route): step 1/1. In terms of biological role, catalyzes the transfer of a methyl group from 5-methyltetrahydrofolate to homocysteine resulting in methionine formation. The sequence is that of 5-methyltetrahydropteroyltriglutamate--homocysteine methyltransferase 1 from Oryza sativa subsp. japonica (Rice).